The primary structure comprises 502 residues: Maturase K (502 aa).

The protein belongs to the intron maturase 2 family. MatK subfamily.

The protein resides in the plastid. It is found in the chloroplast. Its function is as follows. Usually encoded in the trnK tRNA gene intron. Probably assists in splicing its own and other chloroplast group II introns. The chain is Maturase K from Fremontodendron californicum (California flannelbush).